The chain runs to 124 residues: S-adenosylmethionine decarboxylase proenzyme (124 aa).

S63 (schiff-base intermediate with substrate; via pyruvic acid) is an active-site residue. Residue S63 is modified to Pyruvic acid (Ser); by autocatalysis. The active-site Proton acceptor; for processing activity is the H68. Catalysis depends on C83, which acts as the Proton donor; for catalytic activity.

The protein belongs to the prokaryotic AdoMetDC family. Type 1 subfamily. As to quaternary structure, heterotetramer of two alpha and two beta chains arranged as a dimer of alpha/beta heterodimers. The cofactor is pyruvate. Post-translationally, is synthesized initially as an inactive proenzyme. Formation of the active enzyme involves a self-maturation process in which the active site pyruvoyl group is generated from an internal serine residue via an autocatalytic post-translational modification. Two non-identical subunits are generated from the proenzyme in this reaction, and the pyruvate is formed at the N-terminus of the alpha chain, which is derived from the carboxyl end of the proenzyme. The post-translation cleavage follows an unusual pathway, termed non-hydrolytic serinolysis, in which the side chain hydroxyl group of the serine supplies its oxygen atom to form the C-terminus of the beta chain, while the remainder of the serine residue undergoes an oxidative deamination to produce ammonia and the pyruvoyl group blocking the N-terminus of the alpha chain.

It carries out the reaction S-adenosyl-L-methionine + H(+) = S-adenosyl 3-(methylsulfanyl)propylamine + CO2. It functions in the pathway amine and polyamine biosynthesis; S-adenosylmethioninamine biosynthesis; S-adenosylmethioninamine from S-adenosyl-L-methionine: step 1/1. Functionally, catalyzes the decarboxylation of S-adenosylmethionine to S-adenosylmethioninamine (dcAdoMet), the propylamine donor required for the synthesis of the polyamines spermine and spermidine from the diamine putrescine. The protein is S-adenosylmethionine decarboxylase proenzyme of Acetivibrio thermocellus (strain ATCC 27405 / DSM 1237 / JCM 9322 / NBRC 103400 / NCIMB 10682 / NRRL B-4536 / VPI 7372) (Clostridium thermocellum).